Consider the following 532-residue polypeptide: NMDA receptor synaptonuclear signaling and neuronal migration factor (532 aa).

Residue glycine 2 is the site of N-myristoyl glycine attachment. The segment at 2–235 (GAAASRRRAL…FSFQTATTTM (234 aa)) is necessary and sufficient to elicit dendritic processes and synaptic contacts. 2 disordered regions span residues 34 to 67 (SQSH…APHN) and 127 to 174 (RRQR…GCAK). Positions 38–48 (PENRNGADHLL) are enriched in basic and acidic residues. A compositionally biased stretch (basic residues) spans 127–139 (RRQRERHPHHHSQ). Positions 155–164 (PCQSWAGSRQ) are enriched in polar residues. Serine 206 carries the phosphoserine modification. Residues 247-252 (RKRRKR) carry the Nuclear localization signal motif. Residues 275–315 (RVKAQTFAERRERSFSRSWSDPTPMKADTSHDSRDSSDLQS) are disordered. Serine 292 and serine 294 each carry phosphoserine. A compositionally biased stretch (basic and acidic residues) spans 302 to 311 (DTSHDSRDSS).

Belongs to the NSMF family. In terms of assembly, interacts with KPNA1; the interaction occurs in a calcium-independent manner after synaptic NMDA receptor stimulation and is required for nuclear import of NSMF but is competed by CABP1. Interacts (via the central NLS-containing motif region) with CABP1 (via EF-hands 1 and 2); the interaction occurs in a calcium-dependent manner after synaptic NMDA receptor stimulation and prevents the nuclear import of NSMF. Cannot be competed by calmodulin. Proteolytically processed after NMDA receptor activation. Cleaved in a calcium-dependent and calpain-sensitive manner. Calpain cleavage is essential for the translocation process from dendrites to the nucleus. In terms of tissue distribution, expressed in the radiatum and pyramidale strata of the hippocampus (at protein level). Strongly expressed in the brain. Expressed in the sensory and motor cortex, hippocampus, olfactory bulb, thalamus and amygdala. In the olfactory bulb expressed in the granular cell layer, mitral cell layer and the glomerular layer. In the hippocampus highly expressed in the regions associated with neuronal cell types as CA1, CA2, CA3 and granule cells of the dentate gyrus. All isoforms have been detected in the molecular layers of the hippocampus.

Its subcellular location is the nucleus. The protein resides in the nucleus envelope. It is found in the nucleus membrane. The protein localises to the nucleus matrix. It localises to the cytoplasm. Its subcellular location is the cell cortex. The protein resides in the cytoskeleton. It is found in the cell membrane. The protein localises to the cell projection. It localises to the dendrite. Its subcellular location is the synapse. The protein resides in the synaptosome. It is found in the postsynaptic density. The protein localises to the membrane. In terms of biological role, couples NMDA-sensitive glutamate receptor signaling to the nucleus and triggers long-lasting changes in the cytoarchitecture of dendrites and spine synapse processes. Part of the cAMP response element-binding protein (CREB) shut-off signaling pathway. Stimulates outgrowth of olfactory axons and migration of gonadotropin-releasing hormone (GnRH) and luteinizing-hormone-releasing hormone (LHRH) neuronal cells. The polypeptide is NMDA receptor synaptonuclear signaling and neuronal migration factor (Nsmf) (Rattus norvegicus (Rat)).